A 174-amino-acid polypeptide reads, in one-letter code: UPF0316 protein lmo1776 (174 aa).

3 consecutive transmembrane segments (helical) span residues 4–24 (GIFI…IYTV), 36–56 (LAAL…SLVL), and 62–82 (IANV…GMKI).

The protein belongs to the UPF0316 family.

It localises to the cell membrane. The chain is UPF0316 protein lmo1776 from Listeria monocytogenes serovar 1/2a (strain ATCC BAA-679 / EGD-e).